Here is a 225-residue protein sequence, read N- to C-terminus: Endonuclease V (225 aa).

Positions 43 and 110 each coordinate Mg(2+). Interaction with target DNA regions lie at residues 139–141 (KSR) and 214–221 (HIYTQRLK).

Belongs to the endonuclease V family. Mg(2+) is required as a cofactor.

The protein resides in the cytoplasm. The enzyme catalyses Endonucleolytic cleavage at apurinic or apyrimidinic sites to products with a 5'-phosphate.. In terms of biological role, DNA repair enzyme involved in the repair of deaminated bases. Selectively cleaves double-stranded DNA at the second phosphodiester bond 3' to a deoxyinosine leaving behind the intact lesion on the nicked DNA. In vitro, can also cleave single-stranded substrates with inosine, double-stranded DNA with apurinic sites, or DNA sites with uracil or a mismatched base. When present in molar excess, two protein molecules can bind to the same DNA substrate and effect cleavage of both strands (in vitro). This chain is Endonuclease V, found in Thermotoga maritima (strain ATCC 43589 / DSM 3109 / JCM 10099 / NBRC 100826 / MSB8).